A 279-amino-acid polypeptide reads, in one-letter code: Conserved oligomeric Golgi complex subunit 7 (279 aa).

Component of the conserved oligomeric Golgi (COG or Sec34/Sec35) complex which consists of eight different proteins COG1-COG8.

It localises to the golgi apparatus membrane. In terms of biological role, acts as a component of the peripheral membrane COG complex that is involved in intra-Golgi protein trafficking. COG is located at the cis-Golgi, and regulates tethering of retrograde intra-Golgi vesicles and possibly a number of other membrane trafficking events. This chain is Conserved oligomeric Golgi complex subunit 7 (COG7), found in Saccharomyces cerevisiae (strain ATCC 204508 / S288c) (Baker's yeast).